The following is a 280-amino-acid chain: Eukaryotic translation initiation factor 3 subunit F-1 (280 aa).

In terms of domain architecture, MPN spans 8–138; that stretch reads VRVHPVVLFQ…LRAYVCIQLG (131 aa).

This sequence belongs to the eIF-3 subunit F family. As to quaternary structure, component of the eukaryotic translation initiation factor 3 (eIF-3) complex. The eIF-3 complex interacts with pix.

The protein localises to the cytoplasm. Component of the eukaryotic translation initiation factor 3 (eIF-3) complex, which is involved in protein synthesis of a specialized repertoire of mRNAs and, together with other initiation factors, stimulates binding of mRNA and methionyl-tRNAi to the 40S ribosome. The eIF-3 complex specifically targets and initiates translation of a subset of mRNAs involved in cell proliferation. In Drosophila willistoni (Fruit fly), this protein is Eukaryotic translation initiation factor 3 subunit F-1.